Here is a 191-residue protein sequence, read N- to C-terminus: ATP-dependent Clp protease proteolytic subunit 1 (191 aa).

Ser-91 functions as the Nucleophile in the catalytic mechanism. Residue His-116 is part of the active site.

It belongs to the peptidase S14 family. As to quaternary structure, fourteen ClpP subunits assemble into 2 heptameric rings which stack back to back to give a disk-like structure with a central cavity, resembling the structure of eukaryotic proteasomes.

The protein resides in the cytoplasm. It catalyses the reaction Hydrolysis of proteins to small peptides in the presence of ATP and magnesium. alpha-casein is the usual test substrate. In the absence of ATP, only oligopeptides shorter than five residues are hydrolyzed (such as succinyl-Leu-Tyr-|-NHMec, and Leu-Tyr-Leu-|-Tyr-Trp, in which cleavage of the -Tyr-|-Leu- and -Tyr-|-Trp bonds also occurs).. Its function is as follows. Cleaves peptides in various proteins in a process that requires ATP hydrolysis. Has a chymotrypsin-like activity. Plays a major role in the degradation of misfolded proteins. The sequence is that of ATP-dependent Clp protease proteolytic subunit 1 from Chlamydia caviae (strain ATCC VR-813 / DSM 19441 / 03DC25 / GPIC) (Chlamydophila caviae).